Consider the following 465-residue polypeptide: Cysteine--tRNA ligase (465 aa).

Cys27 is a Zn(2+) binding site. Positions 29 to 39 (PTVYDDAHLGH) match the 'HIGH' region motif. Residues 153-173 (DISHKVSDDDTQSRVEHNSEK) form a disordered region. Zn(2+)-binding residues include Cys208, His237, and Glu241. Positions 269-273 (KMSKS) match the 'KMSKS' region motif. Lys272 lines the ATP pocket.

Belongs to the class-I aminoacyl-tRNA synthetase family. Monomer. Zn(2+) is required as a cofactor.

The protein localises to the cytoplasm. It carries out the reaction tRNA(Cys) + L-cysteine + ATP = L-cysteinyl-tRNA(Cys) + AMP + diphosphate. The protein is Cysteine--tRNA ligase of Sulfurovum sp. (strain NBC37-1).